The primary structure comprises 402 residues: Envelope glycoprotein D (402 aa).

Positions Met-1–Cys-30 are cleaved as a signal peptide. Residues Glu-31–Gly-355 lie on the Virion surface side of the membrane. N-linked (GlcNAc...) asparagine; by host glycosylation is found at Asn-53 and Asn-61. 3 disulfides stabilise this stretch: Cys-88-Cys-209, Cys-126-Cys-223, and Cys-138-Cys-147. The disordered stretch occupies residues Pro-281 to Lys-315. N-linked (GlcNAc...) asparagine; by host glycosylation is found at Asn-297 and Asn-346. Residues Leu-356–Leu-372 form a helical membrane-spanning segment. Over Arg-373–Pro-402 the chain is Intravirion.

Belongs to the herpesviridae glycoprotein D family.

Its subcellular location is the virion membrane. Its function is as follows. Envelope glycoprotein that binds to host cell entry receptors, promoting the virus entry into host cells. May trigger fusion with host membrane, by recruiting the fusion machinery composed of gB and gH/gL. This chain is Envelope glycoprotein D (gD), found in Equus caballus (Horse).